Reading from the N-terminus, the 62-residue chain is DNA-directed RNA polymerase subunit Rpo10 (62 aa).

Zn(2+) is bound by residues Cys6, Cys9, Cys43, and Cys44.

This sequence belongs to the archaeal Rpo10/eukaryotic RPB10 RNA polymerase subunit family. As to quaternary structure, part of the RNA polymerase complex. The cofactor is Zn(2+).

It is found in the cytoplasm. The enzyme catalyses RNA(n) + a ribonucleoside 5'-triphosphate = RNA(n+1) + diphosphate. DNA-dependent RNA polymerase (RNAP) catalyzes the transcription of DNA into RNA using the four ribonucleoside triphosphates as substrates. This chain is DNA-directed RNA polymerase subunit Rpo10, found in Methanocorpusculum labreanum (strain ATCC 43576 / DSM 4855 / Z).